The following is a 211-amino-acid chain: Eukaryotic translation initiation factor 4E (211 aa).

The protein belongs to the eukaryotic initiation factor 4E family. As to quaternary structure, eIF4F is a multi-subunit complex, the composition of which varies with external and internal environmental conditions. It is composed of at least eIF4A, eIF4E and eIF4G. eIF4E is also known to interact with other partners.

In terms of biological role, recognizes and binds the 7-methylguanosine-containing mRNA cap during an early step in the initiation of protein synthesis and facilitates ribosome binding by inducing the unwinding of the mRNAs secondary structures. This chain is Eukaryotic translation initiation factor 4E (TIF45), found in Eremothecium gossypii (strain ATCC 10895 / CBS 109.51 / FGSC 9923 / NRRL Y-1056) (Yeast).